The following is a 410-amino-acid chain: Pyruvate dehydrogenase complex protein X component, mitochondrial (410 aa).

The N-terminal 30 residues, 1–30 (MLSAISKVSTLKSCTRYLTKCNYHASAKLL), are a transit peptide targeting the mitochondrion. The 77-residue stretch at 32–108 (VKTFSMPAMS…DVGEPIAYIA (77 aa)) folds into the Lipoyl-binding domain. Position 73 is an N6-lipoyllysine (lysine 73). Positions 169-210 (TLLPSVSLLLAENNISKQKALKEIAPSGSNGRLLKGDVLAYL) constitute a Peripheral subunit-binding (PSBD) domain.

Belongs to the 2-oxoacid dehydrogenase family. In terms of assembly, eukaryotic pyruvate dehydrogenase (PDH) complexes are organized as a core consisting of the oligomeric dihydrolipoamide acetyl-transferase (E2), around which are arranged multiple copies of pyruvate dehydrogenase (E1), dihydrolipoamide dehydrogenase (E3) and protein X (E3BP) bound by non-covalent bonds.

It is found in the mitochondrion matrix. Functionally, required for anchoring dihydrolipoamide dehydrogenase (E3) to the dihydrolipoamide transacetylase (E2) core of the pyruvate dehydrogenase complexes of eukaryotes. This specific binding is essential for a functional PDH complex. The chain is Pyruvate dehydrogenase complex protein X component, mitochondrial (PDX1) from Saccharomyces cerevisiae (strain ATCC 204508 / S288c) (Baker's yeast).